Here is a 206-residue protein sequence, read N- to C-terminus: Holliday junction branch migration complex subunit RuvA (206 aa).

The interval 1–64 (MIAKLTGLLD…EDNIQLFGFA (64 aa)) is domain I. Residues 65-143 (DTEERDWFRL…SFGAPAPAAA (79 aa)) form a domain II region. A flexible linker region spans residues 144–154 (TAGKGGAAPAG). The domain III stretch occupies residues 154–206 (GPAGAVADAVSALVNLGYRRVEAFTAVNAVAQRLGPEAGVSDLIRAGLKELSP).

It belongs to the RuvA family. In terms of assembly, homotetramer. Forms an RuvA(8)-RuvB(12)-Holliday junction (HJ) complex. HJ DNA is sandwiched between 2 RuvA tetramers; dsDNA enters through RuvA and exits via RuvB. An RuvB hexamer assembles on each DNA strand where it exits the tetramer. Each RuvB hexamer is contacted by two RuvA subunits (via domain III) on 2 adjacent RuvB subunits; this complex drives branch migration. In the full resolvosome a probable DNA-RuvA(4)-RuvB(12)-RuvC(2) complex forms which resolves the HJ.

It localises to the cytoplasm. In terms of biological role, the RuvA-RuvB-RuvC complex processes Holliday junction (HJ) DNA during genetic recombination and DNA repair, while the RuvA-RuvB complex plays an important role in the rescue of blocked DNA replication forks via replication fork reversal (RFR). RuvA specifically binds to HJ cruciform DNA, conferring on it an open structure. The RuvB hexamer acts as an ATP-dependent pump, pulling dsDNA into and through the RuvAB complex. HJ branch migration allows RuvC to scan DNA until it finds its consensus sequence, where it cleaves and resolves the cruciform DNA. The sequence is that of Holliday junction branch migration complex subunit RuvA from Rhodospirillum centenum (strain ATCC 51521 / SW).